Reading from the N-terminus, the 95-residue chain is Aspartyl/glutamyl-tRNA(Asn/Gln) amidotransferase subunit C (95 aa).

The protein belongs to the GatC family. As to quaternary structure, heterotrimer of A, B and C subunits.

The catalysed reaction is L-glutamyl-tRNA(Gln) + L-glutamine + ATP + H2O = L-glutaminyl-tRNA(Gln) + L-glutamate + ADP + phosphate + H(+). It catalyses the reaction L-aspartyl-tRNA(Asn) + L-glutamine + ATP + H2O = L-asparaginyl-tRNA(Asn) + L-glutamate + ADP + phosphate + 2 H(+). In terms of biological role, allows the formation of correctly charged Asn-tRNA(Asn) or Gln-tRNA(Gln) through the transamidation of misacylated Asp-tRNA(Asn) or Glu-tRNA(Gln) in organisms which lack either or both of asparaginyl-tRNA or glutaminyl-tRNA synthetases. The reaction takes place in the presence of glutamine and ATP through an activated phospho-Asp-tRNA(Asn) or phospho-Glu-tRNA(Gln). The chain is Aspartyl/glutamyl-tRNA(Asn/Gln) amidotransferase subunit C from Dehalococcoides mccartyi (strain ATCC BAA-2100 / JCM 16839 / KCTC 5957 / BAV1).